Reading from the N-terminus, the 128-residue chain is Disintegrin lebein-2-alpha (128 aa).

The first 20 residues, 1-20 (MIQVLLVTICLAVFPFHGSS), serve as a signal peptide directing secretion. Residues 21-46 (IILESGNVNDYEVVYPKKVTLLPTGA) constitute a propeptide that is removed on maturation. Residues 47-111 (MNSANPCCDP…SDCPRNPWKS (65 aa)) form the Disintegrin domain. Disulfide bonds link C53-C76, C67-C73, C72-C97, and C85-C104. Positions 89-91 (MLD) match the Cell attachment site; atypical (MLD) motif. A propeptide spanning residues 112 to 128 (EEDEMKWSATAKGSVLM) is cleaved from the precursor.

It belongs to the disintegrin family. Dimeric disintegrin subfamily. Heterodimer with subunit beta; disulfide-linked. In terms of tissue distribution, expressed by the venom gland.

It localises to the secreted. Inhibits ADP-induced human platelet aggregation. Antagonist of alpha-IIb/beta-3 (ITGA2B/ITGB3). Also avidly binds to the laminin-binding beta-1 integrins (alpha-3/beta-1 (ITGA3/ITGB1), alpha-6/beta-1 (ITGA6/ITGB1), and alpha-7/beta-1 (ITGA7/ITGB1)) in an RGD-independent manner. In Macrovipera lebetinus (Levantine viper), this protein is Disintegrin lebein-2-alpha.